The sequence spans 325 residues: MANLRELRSRIKSVNSTKKITKAQELIATSRITKAQARVDASQPYAHEITKVIERLASASSLDHKMIREPKDPKRAAILVVSSDRGMCGGYNNNVFKTTAELRKLLEDEGKEVVLYVLGSKGVTYYNFRNENISGSWTGHSQDPVYAETLNLRNHLIGGFLAGSEGTVDVVDGVNAEGDQVPGFDEVHMVYTEFHSMLSQVPKAHRLLPIKTVVEEEKMELGSDMVSDSADQVSAEVDFEPDADTLLANLLPQYVSRGIFAALLEAAASESAARRTAMSAATDNASELVENLSRIANQARQAQITQEITEIVGGASALGDSGESD.

It belongs to the ATPase gamma chain family. F-type ATPases have 2 components, CF(1) - the catalytic core - and CF(0) - the membrane proton channel. CF(1) has five subunits: alpha(3), beta(3), gamma(1), delta(1), epsilon(1). CF(0) has three main subunits: a, b and c.

Its subcellular location is the cell membrane. Functionally, produces ATP from ADP in the presence of a proton gradient across the membrane. The gamma chain is believed to be important in regulating ATPase activity and the flow of protons through the CF(0) complex. The chain is ATP synthase gamma chain from Corynebacterium urealyticum (strain ATCC 43042 / DSM 7109).